The primary structure comprises 476 residues: Cytosolic iron-sulfur assembly component 3 (476 aa).

N-acetylalanine is present on Ala-2. [4Fe-4S] cluster contacts are provided by Cys-24, Cys-71, Cys-74, Cys-77, Cys-190, and Cys-246. Residues 297 to 316 form a disordered region; sequence DGLTSSVSAEEPSSHRGGGS. 2 residues coordinate [4Fe-4S] cluster: Cys-395 and Cys-399.

Belongs to the NARF family. As to quaternary structure, external component of the CIA complex. In the CIA complex, interacts directly with CIAO1 and MMS19.

In terms of biological role, component of the cytosolic iron-sulfur protein assembly (CIA) complex, a multiprotein complex that mediates the incorporation of iron-sulfur cluster into extramitochondrial Fe/S proteins. Seems to negatively regulate the level of HIF1A expression, although this effect could be indirect. The polypeptide is Cytosolic iron-sulfur assembly component 3 (Ciao3) (Mus musculus (Mouse)).